Consider the following 222-residue polypeptide: Glutathione S-transferase U21 (222 aa).

In terms of domain architecture, GST N-terminal spans 3–83 (AEVILLGFWP…YIDEVWSDNN (81 aa)). Glutathione-binding positions include 13 to 14 (SM), 40 to 41 (NK), 54 to 55 (TI), and 67 to 68 (ES). One can recognise a GST C-terminal domain in the interval 89 to 211 (DPYHRAQALF…LPDSEKVVGY (123 aa)).

The protein belongs to the GST superfamily. Tau family.

It is found in the cytoplasm. It localises to the cytosol. The catalysed reaction is RX + glutathione = an S-substituted glutathione + a halide anion + H(+). Functionally, may be involved in the conjugation of reduced glutathione to a wide number of exogenous and endogenous hydrophobic electrophiles and have a detoxification role against certain herbicides. The polypeptide is Glutathione S-transferase U21 (GSTU21) (Arabidopsis thaliana (Mouse-ear cress)).